The following is a 697-amino-acid chain: MMRPVVVKEKRVNESHIHAVEDEVRQAKTMDRDIVKHAMKQSVAKLNPKVMIKNPIMFVVEIGFVITFILSFFPSHSSSIPGWFNITVSLILLFTVLFANFAEALAEGRGKAQADSLKQSKKDVFANVVKENGEIVQVSATDLRKDDVVIVKQGEMIPSDGEVIKGLASVDESAITGESAPVIKEAGGDFCSVTGGTMVVSDEITIVITSNPGESFIDKMISLVEGAARQKTPNEIALNTVLTSLTLIFLIVVVTLPIFTNYLGFQIDTAVLVALLVCLIPTTIGGLLSAIGIAGMDRVTKFNVLAMSGKAVEAAGDINTIILDKTGTITFGNRMAHTLLPVGNETIEQVGKWAAISSVLDETPEGRSVIEHVQAKSISYNKELAEQGEFIPFKAETRMSGVDLQDGTKVRKGAVGSVIEWVKSQGGTIPKDVNQKADFISKEGGTPLVVAVDNRIYGLIYLKDTVKPGMRERFEQLRQMGIKTVMCTGDNPLTAATIAKEAGVDEFVAECKPEDKIAVIKAEQDKGKLVAMTGDGTNDAPALAQADVGLAMNSGTTAAKEAANMIDLDSNPTKIIEVVGIGKQLLMTRGALTTFSIANDIAKYFAIIPAMFTLAIPQMEALNIMKLTSPLSAILSALLFNAVIIPLLIPLAMKGIAYKPMSSNALLGRNLLIYGLGGVIVPFIGIKVIDIIVGLFI.

The next 4 helical transmembrane spans lie at 55 to 75, 79 to 99, 245 to 265, and 271 to 291; these read PIMF…FFPS, SIPG…VLFA, LTLI…YLGF, and VLVA…LSAI. Catalysis depends on D324, which acts as the 4-aspartylphosphate intermediate. Residues D361, E365, 393–400, and K412 contribute to the ATP site; that span reads FKAETRMS. Positions 535 and 539 each coordinate Mg(2+). The next 3 helical transmembrane spans lie at 605–625, 633–653, and 677–697; these read FAII…LNIM, AILS…PLAM, and GGVI…GLFI.

It belongs to the cation transport ATPase (P-type) (TC 3.A.3) family. Type IA subfamily. As to quaternary structure, the system is composed of three essential subunits: KdpA, KdpB and KdpC.

Its subcellular location is the cell membrane. It carries out the reaction K(+)(out) + ATP + H2O = K(+)(in) + ADP + phosphate + H(+). Functionally, part of the high-affinity ATP-driven potassium transport (or Kdp) system, which catalyzes the hydrolysis of ATP coupled with the electrogenic transport of potassium into the cytoplasm. This subunit is responsible for energy coupling to the transport system and for the release of the potassium ions to the cytoplasm. This Bacillus cereus (strain AH820) protein is Potassium-transporting ATPase ATP-binding subunit.